The primary structure comprises 1529 residues: Myosin-11 (1529 aa).

The region spanning Ile-11–Met-60 is the Myosin N-terminal SH3-like domain. The region spanning Gly-65 to Thr-735 is the Myosin motor domain. ATP-binding positions include Gly-159–Thr-166 and Asn-212–Lys-220. Actin-binding regions lie at residues Leu-498–Phe-532, Thr-534–Val-557, Phe-592–Leu-616, and Leu-616–Asn-638. 6 consecutive IQ domains span residues Leu-738–Ser-767, Leu-761–Ala-790, Arg-786–Val-815, Leu-809–Ala-838, Gln-834–Leu-863, and Leu-857–Glu-886. Positions Thr-887–Ala-1059 form a coiled coil. Residues Glu-993–Ala-1027 show a composition bias toward basic and acidic residues. Disordered stretches follow at residues Glu-993–Gln-1031 and Ile-1096–Lys-1115. Positions Asp-1163 to Glu-1472 constitute a Dilute domain.

Belongs to the TRAFAC class myosin-kinesin ATPase superfamily. Myosin family. Plant myosin class XI subfamily. In terms of assembly, homodimer.

It is found in the cytoplasm. Functionally, myosin heavy chain that is required for the cell cycle-regulated transport of various organelles and proteins for their segregation. Functions by binding with its tail domain to receptor proteins on organelles and exerting force with its N-terminal motor domain against actin filaments, thereby transporting its cargo along polarized actin cables. Involved in trafficking of Golgi stacks, mitochondria and peroxisomes. In Arabidopsis thaliana (Mouse-ear cress), this protein is Myosin-11 (XI-E).